A 298-amino-acid polypeptide reads, in one-letter code: Putative insertion sequence ATP-binding protein y4iQ/y4nD/y4sD (298 aa).

114 to 121 (GPPGGGKS) is an ATP binding site. The disordered stretch occupies residues 276-298 (RQSEHDETLASDNQHDTFMPTAT).

The protein belongs to the IS21/IS1162 putative ATP-binding protein family.

The protein is Putative insertion sequence ATP-binding protein y4iQ/y4nD/y4sD of Sinorhizobium fredii (strain NBRC 101917 / NGR234).